Reading from the N-terminus, the 878-residue chain is Alanine--tRNA ligase (878 aa).

Zn(2+) is bound by residues His570, His574, Cys672, and His676. Residues Gly844–Ala864 are disordered. Over residues Ala855 to Ala864 the composition is skewed to low complexity.

Belongs to the class-II aminoacyl-tRNA synthetase family. Zn(2+) is required as a cofactor.

Its subcellular location is the cytoplasm. It carries out the reaction tRNA(Ala) + L-alanine + ATP = L-alanyl-tRNA(Ala) + AMP + diphosphate. Catalyzes the attachment of alanine to tRNA(Ala) in a two-step reaction: alanine is first activated by ATP to form Ala-AMP and then transferred to the acceptor end of tRNA(Ala). Also edits incorrectly charged Ser-tRNA(Ala) and Gly-tRNA(Ala) via its editing domain. The sequence is that of Alanine--tRNA ligase from Paramagnetospirillum magneticum (strain ATCC 700264 / AMB-1) (Magnetospirillum magneticum).